Consider the following 314-residue polypeptide: Aspartate carbamoyltransferase catalytic subunit (314 aa).

Residues arginine 55 and threonine 56 each coordinate carbamoyl phosphate. Lysine 83 is an L-aspartate binding site. Residues arginine 105, histidine 139, and glutamine 142 each coordinate carbamoyl phosphate. Residues arginine 172 and arginine 226 each coordinate L-aspartate. Glycine 267 and proline 268 together coordinate carbamoyl phosphate.

It belongs to the aspartate/ornithine carbamoyltransferase superfamily. ATCase family. In terms of assembly, heterododecamer (2C3:3R2) of six catalytic PyrB chains organized as two trimers (C3), and six regulatory PyrI chains organized as three dimers (R2).

The catalysed reaction is carbamoyl phosphate + L-aspartate = N-carbamoyl-L-aspartate + phosphate + H(+). It functions in the pathway pyrimidine metabolism; UMP biosynthesis via de novo pathway; (S)-dihydroorotate from bicarbonate: step 2/3. Catalyzes the condensation of carbamoyl phosphate and aspartate to form carbamoyl aspartate and inorganic phosphate, the committed step in the de novo pyrimidine nucleotide biosynthesis pathway. This is Aspartate carbamoyltransferase catalytic subunit from Rhodococcus jostii (strain RHA1).